The sequence spans 715 residues: DNA ligase (715 aa).

NAD(+) contacts are provided by residues 47–51 (DADYD), 96–97 (SL), and E129. K131 serves as the catalytic N6-AMP-lysine intermediate. Positions 152, 189, 306, and 330 each coordinate NAD(+). Zn(2+)-binding residues include C435, C438, C453, and C459. Positions 637–715 (KRDSAVAGKT…EDEWLALIQG (79 aa)) constitute a BRCT domain.

Belongs to the NAD-dependent DNA ligase family. LigA subfamily. It depends on Mg(2+) as a cofactor. Requires Mn(2+) as cofactor.

It carries out the reaction NAD(+) + (deoxyribonucleotide)n-3'-hydroxyl + 5'-phospho-(deoxyribonucleotide)m = (deoxyribonucleotide)n+m + AMP + beta-nicotinamide D-nucleotide.. Its function is as follows. DNA ligase that catalyzes the formation of phosphodiester linkages between 5'-phosphoryl and 3'-hydroxyl groups in double-stranded DNA using NAD as a coenzyme and as the energy source for the reaction. It is essential for DNA replication and repair of damaged DNA. This is DNA ligase from Rhodopseudomonas palustris (strain BisA53).